The following is a 942-amino-acid chain: Glutamyl aminopeptidase (942 aa).

Residues 1–14 (MSTDSKRYCIKTKH) lie on the Cytoplasmic side of the membrane. Residues 15 to 35 (VAIICAAVVAVGLIVGLSVGL) traverse the membrane as a helical; Signal-anchor for type II membrane protein segment. At 36-942 (TRSCDSKDGG…RDTIRDWFFN (907 aa)) the chain is on the extracellular side. The tract at residues 40 to 74 (DSKDGGQGTTQSPSHLPPTSSPPQDQGVCPASEDE) is disordered. N-linked (GlcNAc...) asparagine glycosylation is found at N110, N114, and N187. Residue E213 coordinates substrate. The N-linked (GlcNAc...) asparagine glycan is linked to N314. 347-351 (GAMEN) is a substrate binding site. The N-linked (GlcNAc...) asparagine glycan is linked to N367. H383 serves as a coordination point for Zn(2+). The active-site Proton acceptor is the E384. Zn(2+) is bound by residues H387 and E406. 9 N-linked (GlcNAc...) asparagine glycosylation sites follow: N557, N579, N587, N597, N632, N668, N753, N786, and N791. R877 lines the substrate pocket.

Belongs to the peptidase M1 family. As to quaternary structure, homodimer; disulfide-linked. Requires Zn(2+) as cofactor.

The protein resides in the cell membrane. The catalysed reaction is Release of N-terminal glutamate (and to a lesser extent aspartate) from a peptide.. Substrate specificity is modulated by calcium which enhances the enzymatic activity for cleavage of acidic residues while reducing its activity with basic residues. Inhibited by aminopeptidase inhibitors amastatin and bestatin. Its function is as follows. Regulates central hypertension through its calcium-modulated preference to cleave N-terminal acidic residues from peptides such as angiotensin II. This is Glutamyl aminopeptidase (ENPEP) from Sus scrofa (Pig).